We begin with the raw amino-acid sequence, 97 residues long: Co-chaperonin GroES (97 aa).

The protein belongs to the GroES chaperonin family. In terms of assembly, heptamer of 7 subunits arranged in a ring. Interacts with the chaperonin GroEL.

It localises to the cytoplasm. Functionally, together with the chaperonin GroEL, plays an essential role in assisting protein folding. The GroEL-GroES system forms a nano-cage that allows encapsulation of the non-native substrate proteins and provides a physical environment optimized to promote and accelerate protein folding. GroES binds to the apical surface of the GroEL ring, thereby capping the opening of the GroEL channel. The chain is Co-chaperonin GroES from Baumannia cicadellinicola subsp. Homalodisca coagulata.